A 445-amino-acid polypeptide reads, in one-letter code: Exodeoxyribonuclease 7 large subunit (445 aa).

This sequence belongs to the XseA family. As to quaternary structure, heterooligomer composed of large and small subunits.

The protein localises to the cytoplasm. The enzyme catalyses Exonucleolytic cleavage in either 5'- to 3'- or 3'- to 5'-direction to yield nucleoside 5'-phosphates.. Functionally, bidirectionally degrades single-stranded DNA into large acid-insoluble oligonucleotides, which are then degraded further into small acid-soluble oligonucleotides. The chain is Exodeoxyribonuclease 7 large subunit from Xanthomonas oryzae pv. oryzae (strain MAFF 311018).